The sequence spans 216 residues: Octanoyltransferase (216 aa).

Residues 32–211 (QEASEMLWFL…RFPYFLEALQ (180 aa)) form the BPL/LPL catalytic domain. Residues 71-78 (RGGRYTYH), 142-144 (AIG), and 155-157 (GFS) contribute to the substrate site. The active-site Acyl-thioester intermediate is the cysteine 173.

Belongs to the LipB family.

Its subcellular location is the cytoplasm. The catalysed reaction is octanoyl-[ACP] + L-lysyl-[protein] = N(6)-octanoyl-L-lysyl-[protein] + holo-[ACP] + H(+). Its pathway is protein modification; protein lipoylation via endogenous pathway; protein N(6)-(lipoyl)lysine from octanoyl-[acyl-carrier-protein]: step 1/2. Catalyzes the transfer of endogenously produced octanoic acid from octanoyl-acyl-carrier-protein onto the lipoyl domains of lipoate-dependent enzymes. Lipoyl-ACP can also act as a substrate although octanoyl-ACP is likely to be the physiological substrate. The protein is Octanoyltransferase of Zymomonas mobilis subsp. mobilis (strain ATCC 31821 / ZM4 / CP4).